Reading from the N-terminus, the 355-residue chain is Ubiquinone biosynthesis protein COQ4 homolog, mitochondrial (355 aa).

Zn(2+)-binding residues include histidine 134, aspartate 135, histidine 138, and glutamate 150.

Belongs to the COQ4 family. Component of a multi-subunit COQ enzyme complex. Requires Zn(2+) as cofactor.

Its subcellular location is the mitochondrion inner membrane. It carries out the reaction a 4-hydroxy-3-methoxy-5-(all-trans-polyprenyl)benzoate + H(+) = a 2-methoxy-6-(all-trans-polyprenyl)phenol + CO2. Its pathway is cofactor biosynthesis; ubiquinone biosynthesis. Its function is as follows. Lyase that catalyzes the C1-decarboxylation of 4-hydroxy-3-methoxy-5-(all-trans-polyprenyl)benzoic acid into 2-methoxy-6-(all-trans-polyprenyl)phenol during ubiquinone biosynthesis. The polypeptide is Ubiquinone biosynthesis protein COQ4 homolog, mitochondrial (Plasmodium yoelii yoelii).